The chain runs to 144 residues: Peptide methionine sulfoxide reductase MsrB (144 aa).

In terms of domain architecture, MsrB spans 6–128 (KDELKKKLTP…NSAALRFIPK (123 aa)). The Nucleophile role is filled by C117.

Belongs to the MsrB Met sulfoxide reductase family.

The enzyme catalyses L-methionyl-[protein] + [thioredoxin]-disulfide + H2O = L-methionyl-(R)-S-oxide-[protein] + [thioredoxin]-dithiol. This Shouchella clausii (strain KSM-K16) (Alkalihalobacillus clausii) protein is Peptide methionine sulfoxide reductase MsrB.